The following is a 454-amino-acid chain: L-cysteine desulfhydrase-like protein lolT1 (454 aa).

Lys227 is modified (N6-(pyridoxal phosphate)lysine).

This sequence belongs to the class-V pyridoxal-phosphate-dependent aminotransferase family. It depends on pyridoxal 5'-phosphate as a cofactor.

It functions in the pathway alkaloid biosynthesis. In terms of biological role, L-cysteine desulfhydrase-like protein; part of the gene cluster that mediates the biosynthesis of loline alkaloids, potent insecticidal agents composed of a pyrrolizidine ring system and an uncommon ether bridge linking carbons 2 and 7. Lolines are structurally differentiated by the various modifications of the L-amino group and include norloline, loline, N-methylloline, N-acetylloline, N-acetylnorloline, and N-formylloline. The first committed step is the condensation of O-acetyl-L-homoserine (derived from L-aspartic acid) and L-proline, probably catalyzed by the gamma-type pyridoxal 5'-phosphate(PLP)-dependent enzyme lolC, to give the diamino diacid, NACPP. Ensuing cyclization, decarboxylation, and acetylation steps yield 1-exo-acetamidopyrrolizidine (AcAP). LolO is required for installation of the ether bridge upon the pathway intermediate, 1-exo-acetamidopyrrolizidine (AcAP). In sequential 2-oxoglutarate- and O(2)-consuming steps, lolO removes hydrogens from C2 and C7 of AcAP to form both carbon-oxygen bonds in N-acetylnorloline (NANL), the precursor to all other lolines. The enzymes lolD, lolE, lolF and lolT have also been proposed to be involved in the ether-bridge installation. Further processing of the exocyclic moiety of NANL by fungal N-acetamidase (LolN), methyltransferase (LolM), and cytochrome P450 (LolP) enzymes, with occasional involvement of a plant acetyltransferase, generates the other known lolines. LolN transforms NANL to norlonine which is monomethylated and dimethylated to respectively lonine and N-methyllonine (NML) by lolM. LolP catalyzes hydroxylation of the methyl group in N-methylloline (NML) and further oxygenation to N-formylloline (NFL). A plant acetyltransferase is responsible for the acetylation of loline to form N-acetylloline (NAL). LolA might interact with aspartate kinase to prevent feedback inhibition of its activity by these end products and thereby promote production of L-homoserine from L-aspartate. The chain is L-cysteine desulfhydrase-like protein lolT1 from Epichloe uncinata (Endophyte fungus).